A 451-amino-acid chain; its full sequence is Phosphoglucosamine mutase (451 aa).

Catalysis depends on serine 103, which acts as the Phosphoserine intermediate. Residues serine 103, aspartate 243, aspartate 245, and aspartate 247 each coordinate Mg(2+). Serine 103 carries the phosphoserine modification.

This sequence belongs to the phosphohexose mutase family. The cofactor is Mg(2+). In terms of processing, activated by phosphorylation.

The enzyme catalyses alpha-D-glucosamine 1-phosphate = D-glucosamine 6-phosphate. In terms of biological role, catalyzes the conversion of glucosamine-6-phosphate to glucosamine-1-phosphate. The protein is Phosphoglucosamine mutase of Levilactobacillus brevis (strain ATCC 367 / BCRC 12310 / CIP 105137 / JCM 1170 / LMG 11437 / NCIMB 947 / NCTC 947) (Lactobacillus brevis).